The primary structure comprises 1730 residues: Nebulin-related-anchoring protein (1730 aa).

The 61-residue stretch at Gln-4–Phe-64 folds into the LIM zinc-binding domain. Nebulin repeat units lie at residues Thr-63–Ser-97, Glu-156–Gly-166, Thr-175–Ser-202, Arg-203–Gly-237, Thr-246–Arg-273, Tyr-298–Gly-307, Thr-316–Gly-343, His-348–Gly-382, Glu-389–Arg-417, Arg-419–Val-453, Lys-487–Leu-521, Asn-522–Gly-556, Gly-558–Gly-592, Leu-602–Thr-626, Arg-627–Val-661, Leu-662–Gly-692, Asn-702–Glu-724, Lys-726–His-760, Gln-761–Ala-795, Gly-797–Gly-831, Gln-844–Ser-869, Gln-870–Lys-896, His-901–Gly-935, Asn-945–Gln-963, Lys-969–His-1003, His-1004–Asp-1038, Gly-1040–Gly-1074, Gly-1078–Ala-1112, Gln-1113–Lys-1139, Gln-1144–Gly-1178, Ile-1183–Gln-1206, Lys-1212–His-1246, Glu-1247–Ala-1281, Gly-1283–Gly-1317, Gly-1321–Ala-1355, Gln-1356–Ala-1390, Leu-1391–Gly-1421, Ser-1429–Lys-1449, Lys-1455–Arg-1481, Arg-1490–Ala-1524, Ser-1526–Gly-1560, Gly-1564–Ser-1598, Gln-1599–Gln-1626, and Leu-1640–Gly-1664. Ser-1081 is subject to Phosphoserine. The disordered stretch occupies residues Lys-1595 to Ser-1620. Over residues Ser-1596 to Gln-1606 the composition is skewed to polar residues.

In terms of assembly, interacts with actin, alpha-actinin, KLHL41, TLN1 and VCL. Interacts with CSRP3. As to expression, expressed in cardiac and skeletal muscle.

In terms of biological role, may be involved in anchoring the terminal actin filaments in the myofibril to the membrane and in transmitting tension from the myofibrils to the extracellular matrix. The polypeptide is Nebulin-related-anchoring protein (Homo sapiens (Human)).